Consider the following 282-residue polypeptide: Pantothenate synthetase (282 aa).

30–37 (MGYLHAGH) lines the ATP pocket. His37 (proton donor) is an active-site residue. A (R)-pantoate-binding site is contributed by Gln61. Gln61 lines the beta-alanine pocket. 147–150 (GKKD) is a binding site for ATP. Gln153 contacts (R)-pantoate. ATP-binding positions include Val176 and 184–187 (MSSR).

Belongs to the pantothenate synthetase family. As to quaternary structure, homodimer.

The protein resides in the cytoplasm. The enzyme catalyses (R)-pantoate + beta-alanine + ATP = (R)-pantothenate + AMP + diphosphate + H(+). The protein operates within cofactor biosynthesis; (R)-pantothenate biosynthesis; (R)-pantothenate from (R)-pantoate and beta-alanine: step 1/1. In terms of biological role, catalyzes the condensation of pantoate with beta-alanine in an ATP-dependent reaction via a pantoyl-adenylate intermediate. This Geotalea uraniireducens (strain Rf4) (Geobacter uraniireducens) protein is Pantothenate synthetase.